Consider the following 244-residue polypeptide: Protein A47 (244 aa).

Belongs to the orthopoxvirus A47 protein family.

The sequence is that of Protein A47 from Homo sapiens (Human).